Reading from the N-terminus, the 1327-residue chain is Vascular endothelial growth factor receptor 1 (1327 aa).

A signal peptide spans Met1 to Gly24. Residues Ser25–Leu749 lie on the Extracellular side of the membrane. 7 Ig-like C2-type domains span residues Pro30 to Tyr121, Val120 to Thr222, Asp227 to Ile323, Asn331 to Thr417, Pro424 to Ser545, Pro552 to Ser644, and Pro651 to Thr737. Asn48, Asn73, Asn82, Asn98, and Asn125 each carry an N-linked (GlcNAc...) asparagine glycan. An intrachain disulfide couples Cys51 to Cys105. An intrachain disulfide couples Cys154 to Cys203. An N-linked (GlcNAc...) asparagine glycan is attached at Asn247. Residues Cys248 and Cys307 are joined by a disulfide bond. N-linked (GlcNAc...) asparagine glycans are attached at residues Asn319, Asn383, Asn398, Asn409, Asn413, Asn470, Asn512, Asn543, Asn593, Asn615, and Asn663. A disulfide bridge connects residues Cys450 and Cys531. Cys573 and Cys626 are disulfide-bonded. A disulfide bridge connects residues Cys672 and Cys721. The chain crosses the membrane as a helical span at residues Ile750–Ile770. Residues Arg771 to Ile1327 lie on the Cytoplasmic side of the membrane. In terms of domain architecture, Protein kinase spans Leu819–Leu1151. Residues Leu825 to Val833 and Lys853 contribute to the ATP site. The segment at Ala950–Asp971 is disordered. Over residues Ser951–Ser961 the composition is skewed to low complexity. Asp1015 serves as the catalytic Proton acceptor. Residues Tyr1046, Tyr1162, Tyr1202, Tyr1231, Tyr1316, and Tyr1322 each carry the phosphotyrosine; by autocatalysis modification.

Belongs to the protein kinase superfamily. Tyr protein kinase family. CSF-1/PDGF receptor subfamily. Interacts with VEGFA, VEGFB and PGF. Monomer in the absence of bound VEGFA, VEGFB or PGF. Homodimer in the presence of bound VEGFA, VEGFB and PGF. Autophosphorylated on tyrosine residues upon ligand binding.

It localises to the cell membrane. The protein localises to the endosome. The protein resides in the secreted. The enzyme catalyses L-tyrosyl-[protein] + ATP = O-phospho-L-tyrosyl-[protein] + ADP + H(+). With respect to regulation, present in an inactive conformation in the absence of bound ligand. Binding of VEGFA, VEGFB or PGF leads to dimerization and activation by autophosphorylation on tyrosine residues. Functionally, tyrosine-protein kinase that acts as a cell-surface receptor for VEGFA, VEGFB and PGF, and plays an essential role in the regulation of angiogenesis, cell survival, cell migration, macrophage function, and chemotaxis. Acts as a positive regulator of postnatal retinal hyaloid vessel regression. Has very high affinity for VEGFA and relatively low protein kinase activity; may function as a negative regulator of VEGFA signaling by limiting the amount of free VEGFA and preventing its binding to KDR. Ligand binding leads to the activation of several signaling cascades. Activation of PLCG1 leads to the production of the cellular signaling molecules diacylglycerol and inositol 1,4,5-trisphosphate and the activation of protein kinase C. Mediates phosphorylation of PIK3R1, the regulatory subunit of phosphatidylinositol 3-kinase, leading to activation of phosphatidylinositol kinase and the downstream signaling pathway. Mediates activation of MAPK1/ERK2, MAPK3/ERK1 and the MAP kinase signaling pathway, as well as of the AKT1 signaling pathway. Phosphorylates PLCG1. Promotes phosphorylation of AKT1 and CBL. The chain is Vascular endothelial growth factor receptor 1 (FLT1) from Gallus gallus (Chicken).